The following is a 126-amino-acid chain: Holo-[acyl-carrier-protein] synthase (126 aa).

Mg(2+)-binding residues include Asp-9 and Glu-58.

Belongs to the P-Pant transferase superfamily. AcpS family. The cofactor is Mg(2+).

The protein localises to the cytoplasm. It carries out the reaction apo-[ACP] + CoA = holo-[ACP] + adenosine 3',5'-bisphosphate + H(+). Transfers the 4'-phosphopantetheine moiety from coenzyme A to a Ser of acyl-carrier-protein. The chain is Holo-[acyl-carrier-protein] synthase from Salmonella paratyphi B (strain ATCC BAA-1250 / SPB7).